A 236-amino-acid polypeptide reads, in one-letter code: Flagellar L-ring protein (236 aa).

The signal sequence occupies residues 1–16 (MRMQLTAVLAASLLAG). A lipid anchor (N-palmitoyl cysteine) is attached at C17. C17 carries the S-diacylglycerol cysteine lipid modification.

The protein belongs to the FlgH family. In terms of assembly, the basal body constitutes a major portion of the flagellar organelle and consists of four rings (L,P,S, and M) mounted on a central rod.

It is found in the cell outer membrane. The protein localises to the bacterial flagellum basal body. Functionally, assembles around the rod to form the L-ring and probably protects the motor/basal body from shearing forces during rotation. The protein is Flagellar L-ring protein of Sinorhizobium fredii (strain NBRC 101917 / NGR234).